The following is a 193-amino-acid chain: MIGRIAGVLLEKNPPHLLIDCNGVGYEVDVPMSTFYNLPGTGEKVVLLTQMIVREDAHLLYGFLTPQERSTFRELLKITGIGARMALAVLSGMSVQELSQTVTMQDAARLTRVPGIGKKTAERLLLELKGKLGADLGAMAGAASQSDHASDILNALLALGYSEKEGLAAIKNVPAGTGVSEGIKLALKALSKA.

Residues 1–64 (MIGRIAGVLL…EDAHLLYGFL (64 aa)) are domain I. Residues 65 to 139 (TPQERSTFRE…GKLGADLGAM (75 aa)) are domain II. The flexible linker stretch occupies residues 139–143 (MAGAA). The tract at residues 144–193 (SQSDHASDILNALLALGYSEKEGLAAIKNVPAGTGVSEGIKLALKALSKA) is domain III.

This sequence belongs to the RuvA family. In terms of assembly, homotetramer. Forms an RuvA(8)-RuvB(12)-Holliday junction (HJ) complex. HJ DNA is sandwiched between 2 RuvA tetramers; dsDNA enters through RuvA and exits via RuvB. An RuvB hexamer assembles on each DNA strand where it exits the tetramer. Each RuvB hexamer is contacted by two RuvA subunits (via domain III) on 2 adjacent RuvB subunits; this complex drives branch migration. In the full resolvosome a probable DNA-RuvA(4)-RuvB(12)-RuvC(2) complex forms which resolves the HJ.

It localises to the cytoplasm. Its function is as follows. The RuvA-RuvB-RuvC complex processes Holliday junction (HJ) DNA during genetic recombination and DNA repair, while the RuvA-RuvB complex plays an important role in the rescue of blocked DNA replication forks via replication fork reversal (RFR). RuvA specifically binds to HJ cruciform DNA, conferring on it an open structure. The RuvB hexamer acts as an ATP-dependent pump, pulling dsDNA into and through the RuvAB complex. HJ branch migration allows RuvC to scan DNA until it finds its consensus sequence, where it cleaves and resolves the cruciform DNA. This Paraburkholderia phymatum (strain DSM 17167 / CIP 108236 / LMG 21445 / STM815) (Burkholderia phymatum) protein is Holliday junction branch migration complex subunit RuvA.